A 179-amino-acid chain; its full sequence is Large ribosomal subunit protein uL6 (179 aa).

Belongs to the universal ribosomal protein uL6 family. As to quaternary structure, part of the 50S ribosomal subunit.

Its function is as follows. This protein binds to the 23S rRNA, and is important in its secondary structure. It is located near the subunit interface in the base of the L7/L12 stalk, and near the tRNA binding site of the peptidyltransferase center. The protein is Large ribosomal subunit protein uL6 of Geotalea daltonii (strain DSM 22248 / JCM 15807 / FRC-32) (Geobacter daltonii).